The following is a 318-amino-acid chain: Protein LplB (318 aa).

The next 6 membrane-spanning stretches (helical) occupy residues 35–55, 94–114, 130–150, 182–202, 236–256, and 289–309; these read LIPGLLYFLIFKYLPMWGVLI, LMLASLDLLFAFPAPLILALL, FIYVPHFVSWTIVVSITFVFF, IVMQSIWKETGWGTILFLAAL, IIVLLILRIGSFLNLGFEQVY, and AVGLFKSVVGIILIFGANYIA. The region spanning 90-305 is the ABC transmembrane type-1 domain; it reads LRNTLMLASL…VVGIILIFGA (216 aa).

Belongs to the binding-protein-dependent transport system permease family. MalFG subfamily.

The protein localises to the cell membrane. This chain is Protein LplB (lplB), found in Bacillus subtilis (strain 168).